The primary structure comprises 344 residues: uncharacterized protein (344 aa).

The tract at residues 190 to 232 (SGKRVRSAKKSGADAARASEGATCDRASSESVSPTARPPAQAS) is disordered.

This is an uncharacterized protein from Treponema pallidum (strain Nichols).